We begin with the raw amino-acid sequence, 119 residues long: Large ribosomal subunit protein bL20 (119 aa).

Belongs to the bacterial ribosomal protein bL20 family.

Functionally, binds directly to 23S ribosomal RNA and is necessary for the in vitro assembly process of the 50S ribosomal subunit. It is not involved in the protein synthesizing functions of that subunit. The protein is Large ribosomal subunit protein bL20 of Clostridium beijerinckii (strain ATCC 51743 / NCIMB 8052) (Clostridium acetobutylicum).